A 366-amino-acid chain; its full sequence is Sigma54-dependent transcriptional activator SfnR (366 aa).

In terms of domain architecture, Sigma-54 factor interaction spans 21 to 250; sequence QVFEDPRSQA…LENVIHHSLL (230 aa). ATP contacts are provided by residues 49–56 and 112–121; these read GETGTGKE and ANGGTLFLDE.

Involved in the dimethyl sulfide degradation pathway. Activates the expression of sfnG and sfnF. The protein is Sigma54-dependent transcriptional activator SfnR of Pseudomonas putida (Arthrobacter siderocapsulatus).